The sequence spans 445 residues: Phosphoglucosamine mutase (445 aa).

Serine 102 acts as the Phosphoserine intermediate in catalysis. Mg(2+) contacts are provided by serine 102, aspartate 241, aspartate 243, and aspartate 245. Serine 102 bears the Phosphoserine mark.

The protein belongs to the phosphohexose mutase family. It depends on Mg(2+) as a cofactor. Post-translationally, activated by phosphorylation.

It catalyses the reaction alpha-D-glucosamine 1-phosphate = D-glucosamine 6-phosphate. Its function is as follows. Catalyzes the conversion of glucosamine-6-phosphate to glucosamine-1-phosphate. This Pectobacterium carotovorum subsp. carotovorum (strain PC1) protein is Phosphoglucosamine mutase.